Reading from the N-terminus, the 368-residue chain is 4-hydroxy-3-methylbut-2-en-1-yl diphosphate synthase (flavodoxin) (368 aa).

The [4Fe-4S] cluster site is built by Cys271, Cys274, Cys306, and Glu313.

Belongs to the IspG family. [4Fe-4S] cluster serves as cofactor.

The enzyme catalyses (2E)-4-hydroxy-3-methylbut-2-enyl diphosphate + oxidized [flavodoxin] + H2O + 2 H(+) = 2-C-methyl-D-erythritol 2,4-cyclic diphosphate + reduced [flavodoxin]. It functions in the pathway isoprenoid biosynthesis; isopentenyl diphosphate biosynthesis via DXP pathway; isopentenyl diphosphate from 1-deoxy-D-xylulose 5-phosphate: step 5/6. Functionally, converts 2C-methyl-D-erythritol 2,4-cyclodiphosphate (ME-2,4cPP) into 1-hydroxy-2-methyl-2-(E)-butenyl 4-diphosphate. The chain is 4-hydroxy-3-methylbut-2-en-1-yl diphosphate synthase (flavodoxin) from Haemophilus influenzae (strain ATCC 51907 / DSM 11121 / KW20 / Rd).